A 177-amino-acid polypeptide reads, in one-letter code: Nucleoside triphosphate/diphosphate phosphatase (177 aa).

Arg23 acts as the Proton donor in catalysis. Asn87, Asp103, Asp105, Asp107, Asp120, and Glu123 together coordinate Mg(2+).

This sequence belongs to the Ntdp family. Mg(2+) is required as a cofactor.

It catalyses the reaction a ribonucleoside 5'-triphosphate + H2O = a ribonucleoside 5'-diphosphate + phosphate + H(+). It carries out the reaction a ribonucleoside 5'-diphosphate + H2O = a ribonucleoside 5'-phosphate + phosphate + H(+). Its function is as follows. Has nucleoside phosphatase activity towards nucleoside triphosphates and nucleoside diphosphates. This is Nucleoside triphosphate/diphosphate phosphatase from Enterococcus faecalis (strain ATCC 700802 / V583).